A 504-amino-acid chain; its full sequence is Glycerol kinase (504 aa).

Threonine 12 contacts ADP. ATP-binding residues include threonine 12, threonine 13, and serine 14. Threonine 12 serves as a coordination point for sn-glycerol 3-phosphate. Arginine 16 lines the ADP pocket. Residues arginine 82, glutamate 83, tyrosine 134, and aspartate 249 each coordinate sn-glycerol 3-phosphate. Arginine 82, glutamate 83, tyrosine 134, aspartate 249, and glutamine 250 together coordinate glycerol. ADP contacts are provided by threonine 271 and glycine 315. Residues threonine 271, glycine 315, glutamine 319, and glycine 416 each coordinate ATP. The ADP site is built by glycine 416 and asparagine 420.

The protein belongs to the FGGY kinase family.

The enzyme catalyses glycerol + ATP = sn-glycerol 3-phosphate + ADP + H(+). It functions in the pathway polyol metabolism; glycerol degradation via glycerol kinase pathway; sn-glycerol 3-phosphate from glycerol: step 1/1. With respect to regulation, inhibited by fructose 1,6-bisphosphate (FBP). Key enzyme in the regulation of glycerol uptake and metabolism. Catalyzes the phosphorylation of glycerol to yield sn-glycerol 3-phosphate. The sequence is that of Glycerol kinase from Mycobacteroides abscessus (strain ATCC 19977 / DSM 44196 / CCUG 20993 / CIP 104536 / JCM 13569 / NCTC 13031 / TMC 1543 / L948) (Mycobacterium abscessus).